The chain runs to 507 residues: Cobyric acid synthase (507 aa).

The GATase cobBQ-type domain occupies 251–448 (DIDIAVVHLP…LHGLFDSDAF (198 aa)). The active-site Nucleophile is cysteine 332. Histidine 440 is an active-site residue.

Belongs to the CobB/CobQ family. CobQ subfamily.

It functions in the pathway cofactor biosynthesis; adenosylcobalamin biosynthesis. Functionally, catalyzes amidations at positions B, D, E, and G on adenosylcobyrinic A,C-diamide. NH(2) groups are provided by glutamine, and one molecule of ATP is hydrogenolyzed for each amidation. The protein is Cobyric acid synthase of Klebsiella pneumoniae (strain 342).